The primary structure comprises 250 residues: Triosephosphate isomerase (250 aa).

9 to 11 (NWK) provides a ligand contact to substrate. Residue His96 is the Electrophile of the active site. Glu166 functions as the Proton acceptor in the catalytic mechanism. Residues Gly172, Ser212, and 233-234 (GG) contribute to the substrate site.

It belongs to the triosephosphate isomerase family. As to quaternary structure, homodimer.

It localises to the cytoplasm. It carries out the reaction D-glyceraldehyde 3-phosphate = dihydroxyacetone phosphate. It participates in carbohydrate biosynthesis; gluconeogenesis. It functions in the pathway carbohydrate degradation; glycolysis; D-glyceraldehyde 3-phosphate from glycerone phosphate: step 1/1. Its function is as follows. Involved in the gluconeogenesis. Catalyzes stereospecifically the conversion of dihydroxyacetone phosphate (DHAP) to D-glyceraldehyde-3-phosphate (G3P). This Chlorobium phaeobacteroides (strain BS1) protein is Triosephosphate isomerase.